Consider the following 193-residue polypeptide: Large ribosomal subunit protein uL18 (193 aa).

It belongs to the universal ribosomal protein uL18 family. Part of the 50S ribosomal subunit. Contacts the 5S and 23S rRNAs.

Its function is as follows. This is one of the proteins that bind and probably mediate the attachment of the 5S RNA into the large ribosomal subunit, where it forms part of the central protuberance. In Methanococcus vannielii (strain ATCC 35089 / DSM 1224 / JCM 13029 / OCM 148 / SB), this protein is Large ribosomal subunit protein uL18.